The following is a 309-amino-acid chain: Nucleoside kinase (309 aa).

D16, G42, and N46 together coordinate substrate. Position 108 (Q108) interacts with ATP. Substrate-binding positions include S110 to F112 and Q166. ATP contacts are provided by residues N189 and K217 to G223. Residue D249 participates in substrate binding. D249 acts as the Proton acceptor in catalysis.

Belongs to the carbohydrate kinase PfkB family. In terms of assembly, homodimer. It depends on Mg(2+) as a cofactor.

Catalyzes the phosphorylation of a wide range of nucleosides to yield nucleoside monophosphates, using ATP, ITP or GTP as phosphate donor. This Methanothermobacter thermautotrophicus (strain ATCC 29096 / DSM 1053 / JCM 10044 / NBRC 100330 / Delta H) (Methanobacterium thermoautotrophicum) protein is Nucleoside kinase.